The sequence spans 330 residues: Putative glycosyltransferase ORF330 (330 aa).

The protein belongs to the glycosyltransferase group 1 family. Glycosyltransferase 4 subfamily.

This chain is Putative glycosyltransferase ORF330, found in Acidianus filamentous virus 2 (isolate Italy/Pozzuoli) (AFV-2).